A 411-amino-acid chain; its full sequence is Inhibin beta B chain (411 aa).

The signal sequence occupies residues methionine 1–glycine 28. Positions glycine 28–glutamate 69 are disordered. The propeptide occupies serine 29–arginine 296. Residues proline 30–alanine 47 show a composition bias toward pro residues. The N-linked (GlcNAc...) asparagine glycan is linked to asparagine 97. 4 cysteine pairs are disulfide-bonded: cysteine 300–cysteine 308, cysteine 307–cysteine 376, cysteine 336–cysteine 408, and cysteine 340–cysteine 410.

This sequence belongs to the TGF-beta family. In terms of assembly, dimeric, linked by one or more disulfide bonds. Inhibin B is a dimer of alpha and beta-B. Activin B is a homodimer of beta-B. Activin AB is a dimer of beta-A and beta-B. Interacts with FST and FSTL3. Activin B interacts with BMPR2. As to expression, uterus, testis, ovary, lung, kidney, brain, CJ7 embryonic stem cells, and possibly in liver.

Its subcellular location is the secreted. In terms of biological role, inhibins and activins inhibit and activate, respectively, the secretion of follitropin by the pituitary gland. Inhibins/activins are involved in regulating a number of diverse functions such as hypothalamic and pituitary hormone secretion, gonadal hormone secretion, germ cell development and maturation, erythroid differentiation, insulin secretion, nerve cell survival, embryonic axial development or bone growth, depending on their subunit composition. Inhibins appear to oppose the functions of activins. Activin B is a dimer of alpha and beta-B that plays a role in several essential biological processes including embryonic development, stem cell maintenance and differentiation, haematopoiesis, cell proliferation and wound healing. Signals through type I receptor ACVR1C, abundantly expressed in pancreatic beta cells, and type II receptors like ACVR2A. Upon ligand binding, these receptors phosphorylate intracellular signaling mediators SMAD2 and SMAD3, which form a complex with SMAD4, translocate to the nucleus, and regulate gene expression. Plays a crucial role in the induction of hepcidin by inflammation through activation of ACVR1C and subsequent phosphorylation of SMAD1/5/8. Regulates adipocyte lipid metabolism by decreasing non-esterified fatty acids and glycerol release and increases intracellular triglyceride content. Stimulates wound healing by promoting cell migration and hair follicle regeneration through the JNK and ERK signaling pathways downstream of RHOA. Its function is as follows. Inhibin B is a dimer of alpha and beta-B that plays a crucial role in the regulation of the reproductive system by inhibiting the secretion of follicle-stimulating hormone (FSH) from the anterior pituitary gland. Thereby, maintains reproductive homeostasis in both males and females. Acts as a more potent suppressor of FSH release than inhibin A. Functions as competitive receptor antagonist binding activin type II receptors with high affinity in the presence of the TGF-beta type III coreceptor/TGFBR3L. This chain is Inhibin beta B chain (Inhbb), found in Mus musculus (Mouse).